The following is a 456-amino-acid chain: Bifunctional protein GlmU (456 aa).

Residues 1-229 (MTKKALSAVI…VMEVEGANNR (229 aa)) are pyrophosphorylase. UDP-N-acetyl-alpha-D-glucosamine is bound by residues 11–14 (LAAG), Lys25, Gln76, 81–82 (GT), 103–105 (YGD), Gly140, Glu154, Asn169, and Asn227. Asp105 is a Mg(2+) binding site. A Mg(2+)-binding site is contributed by Asn227. The tract at residues 230–250 (LQLAALERYLQNKQASKLLLE) is linker. An N-acetyltransferase region spans residues 251–456 (GVMIYDPARF…QGWQRPIKKK (206 aa)). UDP-N-acetyl-alpha-D-glucosamine is bound by residues Arg333 and Lys351. His363 serves as the catalytic Proton acceptor. UDP-N-acetyl-alpha-D-glucosamine-binding residues include Tyr366 and Asn377. Acetyl-CoA contacts are provided by residues Ala380, 386–387 (NY), Ser405, Ala423, and Arg440.

It in the N-terminal section; belongs to the N-acetylglucosamine-1-phosphate uridyltransferase family. In the C-terminal section; belongs to the transferase hexapeptide repeat family. Homotrimer. The cofactor is Mg(2+).

It is found in the cytoplasm. The catalysed reaction is alpha-D-glucosamine 1-phosphate + acetyl-CoA = N-acetyl-alpha-D-glucosamine 1-phosphate + CoA + H(+). It carries out the reaction N-acetyl-alpha-D-glucosamine 1-phosphate + UTP + H(+) = UDP-N-acetyl-alpha-D-glucosamine + diphosphate. It participates in nucleotide-sugar biosynthesis; UDP-N-acetyl-alpha-D-glucosamine biosynthesis; N-acetyl-alpha-D-glucosamine 1-phosphate from alpha-D-glucosamine 6-phosphate (route II): step 2/2. The protein operates within nucleotide-sugar biosynthesis; UDP-N-acetyl-alpha-D-glucosamine biosynthesis; UDP-N-acetyl-alpha-D-glucosamine from N-acetyl-alpha-D-glucosamine 1-phosphate: step 1/1. It functions in the pathway bacterial outer membrane biogenesis; LPS lipid A biosynthesis. Catalyzes the last two sequential reactions in the de novo biosynthetic pathway for UDP-N-acetylglucosamine (UDP-GlcNAc). The C-terminal domain catalyzes the transfer of acetyl group from acetyl coenzyme A to glucosamine-1-phosphate (GlcN-1-P) to produce N-acetylglucosamine-1-phosphate (GlcNAc-1-P), which is converted into UDP-GlcNAc by the transfer of uridine 5-monophosphate (from uridine 5-triphosphate), a reaction catalyzed by the N-terminal domain. The protein is Bifunctional protein GlmU of Haemophilus influenzae (strain PittGG).